Here is a 213-residue protein sequence, read N- to C-terminus: Probable RNA 2'-phosphotransferase (213 aa).

This sequence belongs to the KptA/TPT1 family.

Its function is as follows. Removes the 2'-phosphate from RNA via an intermediate in which the phosphate is ADP-ribosylated by NAD followed by a presumed transesterification to release the RNA and generate ADP-ribose 1''-2''-cyclic phosphate (APPR&gt;P). May function as an ADP-ribosylase. The sequence is that of Probable RNA 2'-phosphotransferase from Pyrobaculum aerophilum (strain ATCC 51768 / DSM 7523 / JCM 9630 / CIP 104966 / NBRC 100827 / IM2).